Reading from the N-terminus, the 294-residue chain is Cell division control protein 2 homolog A (294 aa).

The Protein kinase domain occupies Tyr-4–Phe-287. Residues Ile-10–Val-18 and Lys-33 each bind ATP. Residue Thr-14 is modified to Phosphothreonine. Phosphotyrosine is present on Tyr-15. Asp-127 (proton acceptor) is an active-site residue. The residue at position 161 (Thr-161) is a Phosphothreonine; by CAK.

This sequence belongs to the protein kinase superfamily. CMGC Ser/Thr protein kinase family. CDC2/CDKX subfamily.

It carries out the reaction L-seryl-[protein] + ATP = O-phospho-L-seryl-[protein] + ADP + H(+). The enzyme catalyses L-threonyl-[protein] + ATP = O-phospho-L-threonyl-[protein] + ADP + H(+). The catalysed reaction is [DNA-directed RNA polymerase] + ATP = phospho-[DNA-directed RNA polymerase] + ADP + H(+). Phosphorylation at Thr-14 or Tyr-15 inactivates the enzyme, while phosphorylation at Thr-161 activates it. Plays a key role in the control of the eukaryotic cell cycle. This chain is Cell division control protein 2 homolog A (CDC2A), found in Antirrhinum majus (Garden snapdragon).